The sequence spans 93 residues: Small ribosomal subunit protein uS19 (93 aa).

Belongs to the universal ribosomal protein uS19 family.

In terms of biological role, protein S19 forms a complex with S13 that binds strongly to the 16S ribosomal RNA. This Synechococcus sp. (strain JA-2-3B'a(2-13)) (Cyanobacteria bacterium Yellowstone B-Prime) protein is Small ribosomal subunit protein uS19.